A 287-amino-acid chain; its full sequence is Pyridoxal 5'-phosphate synthase subunit PdxS (287 aa).

A D-ribose 5-phosphate-binding site is contributed by Asp21. The active-site Schiff-base intermediate with D-ribose 5-phosphate is the Lys78. Position 150 (Gly150) interacts with D-ribose 5-phosphate. Residue Arg162 participates in D-glyceraldehyde 3-phosphate binding. D-ribose 5-phosphate-binding positions include Gly211 and Gly232 to Ser233.

It belongs to the PdxS/SNZ family. In the presence of PdxT, forms a dodecamer of heterodimers.

It catalyses the reaction aldehydo-D-ribose 5-phosphate + D-glyceraldehyde 3-phosphate + L-glutamine = pyridoxal 5'-phosphate + L-glutamate + phosphate + 3 H2O + H(+). The protein operates within cofactor biosynthesis; pyridoxal 5'-phosphate biosynthesis. In terms of biological role, catalyzes the formation of pyridoxal 5'-phosphate from ribose 5-phosphate (RBP), glyceraldehyde 3-phosphate (G3P) and ammonia. The ammonia is provided by the PdxT subunit. Can also use ribulose 5-phosphate and dihydroxyacetone phosphate as substrates, resulting from enzyme-catalyzed isomerization of RBP and G3P, respectively. This Tropheryma whipplei (strain TW08/27) (Whipple's bacillus) protein is Pyridoxal 5'-phosphate synthase subunit PdxS.